Reading from the N-terminus, the 126-residue chain is Aspartate 1-decarboxylase (126 aa).

Ser-25 acts as the Schiff-base intermediate with substrate; via pyruvic acid in catalysis. The residue at position 25 (Ser-25) is a Pyruvic acid (Ser). Thr-57 serves as a coordination point for substrate. The Proton donor role is filled by Tyr-58. Residue 73 to 75 participates in substrate binding; it reads GGA.

Belongs to the PanD family. In terms of assembly, heterooctamer of four alpha and four beta subunits. It depends on pyruvate as a cofactor. Post-translationally, is synthesized initially as an inactive proenzyme, which is activated by self-cleavage at a specific serine bond to produce a beta-subunit with a hydroxyl group at its C-terminus and an alpha-subunit with a pyruvoyl group at its N-terminus.

It is found in the cytoplasm. The catalysed reaction is L-aspartate + H(+) = beta-alanine + CO2. It participates in cofactor biosynthesis; (R)-pantothenate biosynthesis; beta-alanine from L-aspartate: step 1/1. Catalyzes the pyruvoyl-dependent decarboxylation of aspartate to produce beta-alanine. The sequence is that of Aspartate 1-decarboxylase from Acinetobacter baylyi (strain ATCC 33305 / BD413 / ADP1).